The sequence spans 876 residues: Bifunctional uridylyltransferase/uridylyl-removing enzyme (876 aa).

Positions 1–332 are uridylyltransferase; the sequence is MPYQSPITFQ…NNGEEAEAVI (332 aa). Positions 333 to 692 are uridylyl-removing; the sequence is IDDDFQRRGN…LSKKATRGGT (360 aa). In terms of domain architecture, HD spans 451–573; sequence VDEHSIRLLK…VRDEERLEYL (123 aa). ACT domains lie at 693-777 and 800-876; these read EVFI…RIPR and LMEF…PSAQ.

The protein belongs to the GlnD family. Mg(2+) serves as cofactor.

It catalyses the reaction [protein-PII]-L-tyrosine + UTP = [protein-PII]-uridylyl-L-tyrosine + diphosphate. The catalysed reaction is [protein-PII]-uridylyl-L-tyrosine + H2O = [protein-PII]-L-tyrosine + UMP + H(+). Uridylyltransferase (UTase) activity is inhibited by glutamine, while glutamine activates uridylyl-removing (UR) activity. Functionally, modifies, by uridylylation and deuridylylation, the PII regulatory proteins (GlnB and homologs), in response to the nitrogen status of the cell that GlnD senses through the glutamine level. Under low glutamine levels, catalyzes the conversion of the PII proteins and UTP to PII-UMP and PPi, while under higher glutamine levels, GlnD hydrolyzes PII-UMP to PII and UMP (deuridylylation). Thus, controls uridylylation state and activity of the PII proteins, and plays an important role in the regulation of nitrogen assimilation and metabolism. The protein is Bifunctional uridylyltransferase/uridylyl-removing enzyme of Vibrio cholerae serotype O1 (strain ATCC 39315 / El Tor Inaba N16961).